The primary structure comprises 252 residues: UPF0246 protein AM1_4276 (252 aa).

The protein belongs to the UPF0246 family.

The sequence is that of UPF0246 protein AM1_4276 from Acaryochloris marina (strain MBIC 11017).